Reading from the N-terminus, the 251-residue chain is Probable inactive cytidine deaminase 4 (251 aa).

61-63 is a binding site for substrate; that stretch reads NVE. E76 acts as the Proton donor in catalysis. Residues 136–251 form the CMP/dCMP-type deaminase domain; the sequence is EHCSHLKCRA…VFRCHKTAEN (116 aa).

Belongs to the cytidine and deoxycytidylate deaminase family. As to quaternary structure, homodimer.

This is Probable inactive cytidine deaminase 4 (CDA4) from Arabidopsis thaliana (Mouse-ear cress).